The sequence spans 142 residues: VapC ribonuclease R02377 (142 aa).

A PINc domain is found at 3-140 (FVDGSVIVAI…YKGNDFSQTD (138 aa)). Mg(2+) is bound by residues Asp-5 and Asp-115.

The protein belongs to the PINc/VapC protein family. Mg(2+) serves as cofactor.

Functionally, toxic component of a type II toxin-antitoxin (TA) system. An RNase. The chain is VapC ribonuclease R02377 from Rhizobium meliloti (strain 1021) (Ensifer meliloti).